A 335-amino-acid polypeptide reads, in one-letter code: Phospho-N-acetylmuramoyl-pentapeptide-transferase (335 aa).

10 helical membrane-spanning segments follow: residues 3–23, 53–73, 78–98, 118–138, 143–163, 174–194, 200–220, 226–246, 251–271, and 314–334; these read LTIL…PHFI, GGTV…LVYF, SLGL…IGFL, FTFQ…PSGI, VFGY…FWVV, GIDG…GVIA, FDVL…FLFN, IFMG…ISIA, WTLL…MLQV, and VDAF…AILY.

This sequence belongs to the glycosyltransferase 4 family. MraY subfamily. The cofactor is Mg(2+).

The protein resides in the cell membrane. It catalyses the reaction UDP-N-acetyl-alpha-D-muramoyl-L-alanyl-gamma-D-glutamyl-L-lysyl-D-alanyl-D-alanine + di-trans,octa-cis-undecaprenyl phosphate = Mur2Ac(oyl-L-Ala-gamma-D-Glu-L-Lys-D-Ala-D-Ala)-di-trans,octa-cis-undecaprenyl diphosphate + UMP. It participates in cell wall biogenesis; peptidoglycan biosynthesis. Its function is as follows. Catalyzes the initial step of the lipid cycle reactions in the biosynthesis of the cell wall peptidoglycan: transfers peptidoglycan precursor phospho-MurNAc-pentapeptide from UDP-MurNAc-pentapeptide onto the lipid carrier undecaprenyl phosphate, yielding undecaprenyl-pyrophosphoryl-MurNAc-pentapeptide, known as lipid I. The chain is Phospho-N-acetylmuramoyl-pentapeptide-transferase from Streptococcus equi subsp. equi (strain 4047).